Reading from the N-terminus, the 439-residue chain is Transmembrane protease serine 11F (439 aa).

Over 1–33 (MMYAPVEFSQTAYPRIEYQRRQQQFWDPIRLAL) the chain is Cytoplasmic. A helical; Signal-anchor for type II membrane protein membrane pass occupies residues 34–54 (FTLAIVAIVGITIGIVTHFVV). The Extracellular portion of the chain corresponds to 55 to 439 (EDDKSFYYLA…RDWIASKTGL (385 aa)). One can recognise an SEA domain in the interval 58 to 176 (KSFYYLASFQ…PSFSLTPIDS (119 aa)). The Peptidase S1 domain maps to 207–438 (IVQGRETAME…YRDWIASKTG (232 aa)). A disulfide bridge links C234 with C250. Catalysis depends on charge relay system residues H249 and D294. 2 disulfides stabilise this stretch: C359/C375 and C386/C414. S390 serves as the catalytic Charge relay system.

The protein belongs to the peptidase S1 family.

It localises to the membrane. Functionally, probable serine protease. The polypeptide is Transmembrane protease serine 11F (Tmprss11f) (Mus musculus (Mouse)).